The primary structure comprises 303 residues: 4-diphosphocytidyl-2-C-methyl-D-erythritol kinase (303 aa).

Residue Lys-18 is part of the active site. Position 111–121 (111–121 (PVASGIGGGSA)) interacts with ATP. The active site involves Asp-153.

The protein belongs to the GHMP kinase family. IspE subfamily.

The catalysed reaction is 4-CDP-2-C-methyl-D-erythritol + ATP = 4-CDP-2-C-methyl-D-erythritol 2-phosphate + ADP + H(+). The protein operates within isoprenoid biosynthesis; isopentenyl diphosphate biosynthesis via DXP pathway; isopentenyl diphosphate from 1-deoxy-D-xylulose 5-phosphate: step 3/6. Its function is as follows. Catalyzes the phosphorylation of the position 2 hydroxy group of 4-diphosphocytidyl-2C-methyl-D-erythritol. This Sinorhizobium medicae (strain WSM419) (Ensifer medicae) protein is 4-diphosphocytidyl-2-C-methyl-D-erythritol kinase.